Here is a 206-residue protein sequence, read N- to C-terminus: Ras-related protein Rab7 (206 aa).

GTP contacts are provided by residues Gly-15 to Thr-22, Asp-63 to Gln-67, and Asn-125 to Asp-128. Residues Cys-204 and Cys-206 are each lipidated (S-geranylgeranyl cysteine). Cys-206 carries the cysteine methyl ester modification.

Belongs to the small GTPase superfamily. Rab family.

The protein localises to the cell membrane. Its function is as follows. Protein transport. Probably involved in vesicular traffic. The polypeptide is Ras-related protein Rab7 (Pisum sativum (Garden pea)).